We begin with the raw amino-acid sequence, 369 residues long: 4-hydroxy-3-methylbut-2-en-1-yl diphosphate synthase (flavodoxin) (369 aa).

Positions 270, 273, 305, and 312 each coordinate [4Fe-4S] cluster.

The protein belongs to the IspG family. Requires [4Fe-4S] cluster as cofactor.

The enzyme catalyses (2E)-4-hydroxy-3-methylbut-2-enyl diphosphate + oxidized [flavodoxin] + H2O + 2 H(+) = 2-C-methyl-D-erythritol 2,4-cyclic diphosphate + reduced [flavodoxin]. Its pathway is isoprenoid biosynthesis; isopentenyl diphosphate biosynthesis via DXP pathway; isopentenyl diphosphate from 1-deoxy-D-xylulose 5-phosphate: step 5/6. Its function is as follows. Converts 2C-methyl-D-erythritol 2,4-cyclodiphosphate (ME-2,4cPP) into 1-hydroxy-2-methyl-2-(E)-butenyl 4-diphosphate. The polypeptide is 4-hydroxy-3-methylbut-2-en-1-yl diphosphate synthase (flavodoxin) (Pseudomonas fluorescens (strain ATCC BAA-477 / NRRL B-23932 / Pf-5)).